A 257-amino-acid polypeptide reads, in one-letter code: Type III pantothenate kinase (257 aa).

6–13 serves as a coordination point for ATP; the sequence is DVGNTNTV. Substrate contacts are provided by residues tyrosine 102 and 109 to 112; that span reads GADR. The active-site Proton acceptor is the aspartate 111. Aspartate 131 provides a ligand contact to K(+). Residue threonine 134 coordinates ATP. Substrate is bound at residue threonine 186.

The protein belongs to the type III pantothenate kinase family. As to quaternary structure, homodimer. Requires NH4(+) as cofactor. The cofactor is K(+).

The protein localises to the cytoplasm. It carries out the reaction (R)-pantothenate + ATP = (R)-4'-phosphopantothenate + ADP + H(+). It participates in cofactor biosynthesis; coenzyme A biosynthesis; CoA from (R)-pantothenate: step 1/5. Its function is as follows. Catalyzes the phosphorylation of pantothenate (Pan), the first step in CoA biosynthesis. The chain is Type III pantothenate kinase from Leptospira interrogans serogroup Icterohaemorrhagiae serovar copenhageni (strain Fiocruz L1-130).